A 168-amino-acid chain; its full sequence is Phosphopantetheine adenylyltransferase (168 aa).

T9 contacts substrate. ATP-binding positions include 9-10 (TF) and H17. Residues K41, L74, and R88 each contribute to the substrate site. Residues 89 to 91 (GLR), E99, and 124 to 130 (LQPIASR) contribute to the ATP site.

The protein belongs to the bacterial CoaD family. In terms of assembly, homohexamer. It depends on Mg(2+) as a cofactor.

It is found in the cytoplasm. The catalysed reaction is (R)-4'-phosphopantetheine + ATP + H(+) = 3'-dephospho-CoA + diphosphate. Its pathway is cofactor biosynthesis; coenzyme A biosynthesis; CoA from (R)-pantothenate: step 4/5. Reversibly transfers an adenylyl group from ATP to 4'-phosphopantetheine, yielding dephospho-CoA (dPCoA) and pyrophosphate. The chain is Phosphopantetheine adenylyltransferase from Sphingopyxis alaskensis (strain DSM 13593 / LMG 18877 / RB2256) (Sphingomonas alaskensis).